Consider the following 390-residue polypeptide: Leu/Ile/Val-binding protein homolog 6 (390 aa).

An N-terminal signal peptide occupies residues 1–21 (MKKIALTALAVFSLAASAAYA).

It belongs to the leucine-binding protein family.

Component of an amino-acid transport system. In Brucella melitensis biotype 1 (strain ATCC 23456 / CCUG 17765 / NCTC 10094 / 16M), this protein is Leu/Ile/Val-binding protein homolog 6.